The following is an 89-amino-acid chain: Small ribosomal subunit protein uS15 (89 aa).

It belongs to the universal ribosomal protein uS15 family. As to quaternary structure, part of the 30S ribosomal subunit. Forms a bridge to the 50S subunit in the 70S ribosome, contacting the 23S rRNA.

One of the primary rRNA binding proteins, it binds directly to 16S rRNA where it helps nucleate assembly of the platform of the 30S subunit by binding and bridging several RNA helices of the 16S rRNA. Its function is as follows. Forms an intersubunit bridge (bridge B4) with the 23S rRNA of the 50S subunit in the ribosome. The polypeptide is Small ribosomal subunit protein uS15 (Thermosynechococcus vestitus (strain NIES-2133 / IAM M-273 / BP-1)).